Consider the following 785-residue polypeptide: Tripartite terminase subunit 1 (785 aa).

The C3H1-type zinc finger occupies 197-225 (CAVCFEELCVTANQGATIARRLADRICNH). Disordered regions lie at residues 433 to 452 (GGAADAPKGGAGPDDDGDRV) and 457 to 489 (GARGLGAPGGGGEDEDRRRGPGGQGPETWGDIA). 696 to 703 (FASVYRCG) lines the ATP pocket.

It belongs to the herpesviridae TRM1 protein family. As to quaternary structure, associates with TRM2 and TRM3 to form the tripartite terminase complex. Interacts with portal protein.

It is found in the host nucleus. Component of the molecular motor that translocates viral genomic DNA in empty capsid during DNA packaging. Forms a tripartite terminase complex together with TRM2 and TRM3 in the host cytoplasm. Once the complex reaches the host nucleus, it interacts with the capsid portal vertex. This portal forms a ring in which genomic DNA is translocated into the capsid. TRM1 carries an endonuclease activity that plays an important role for the cleavage of concatemeric viral DNA into unit length genomes. The sequence is that of Tripartite terminase subunit 1 from Human herpesvirus 1 (strain 17) (HHV-1).